A 109-amino-acid polypeptide reads, in one-letter code: Oncomodulin (109 aa).

The residue at position 2 (serine 2) is an N-acetylserine. 2 EF-hand domains span residues 39–74 and 78–109; these read MSAS…FESG and LTES…MVHS. Ca(2+) is bound by residues aspartate 52, aspartate 54, serine 56, tyrosine 58, glutamate 63, aspartate 91, aspartate 93, aspartate 95, lysine 97, and glutamate 102.

It belongs to the parvalbumin family. As to expression, abundant in the organ of Corti.

Functionally, has some calmodulin-like activity with respect to enzyme activation and growth regulation. Binds two calcium ions. The protein is Oncomodulin (OCM) of Cavia porcellus (Guinea pig).